A 432-amino-acid chain; its full sequence is Putative D-alanyl-D-alanine carboxypeptidase (432 aa).

Residues 7–25 (ATVLLTFSLSAFAVEYPVL) form a helical; Signal-anchor membrane-spanning segment.

Belongs to the peptidase S12 family. YfeW subfamily.

Its subcellular location is the cell inner membrane. The enzyme catalyses Preferential cleavage: (Ac)2-L-Lys-D-Ala-|-D-Ala. Also transpeptidation of peptidyl-alanyl moieties that are N-acyl substituents of D-alanine.. In Salmonella paratyphi A (strain ATCC 9150 / SARB42), this protein is Putative D-alanyl-D-alanine carboxypeptidase.